The primary structure comprises 229 residues: Cell division protein FtsQ (229 aa).

The chain crosses the membrane as a helical span at residues 1 to 21 (MIVLLCVIFAFLVYSNWHSWL). At 22–229 (ESLDRNPIRA…AAVGFSPLPK (208 aa)) the chain is on the periplasmic side. The POTRA domain maps to 27 to 97 (NPIRAYALTH…DRLSITLIEH (71 aa)).

Belongs to the FtsQ/DivIB family. FtsQ subfamily. As to quaternary structure, part of a complex composed of FtsB, FtsL and FtsQ.

It localises to the cell inner membrane. In terms of biological role, essential cell division protein. May link together the upstream cell division proteins, which are predominantly cytoplasmic, with the downstream cell division proteins, which are predominantly periplasmic. May control correct divisome assembly. The polypeptide is Cell division protein FtsQ (Actinobacillus pleuropneumoniae serotype 3 (strain JL03)).